The following is a 242-amino-acid chain: Synaptonemal complex central element protein 1-like (242 aa).

Residues 1 to 24 (MAGKLKPLNVEAPEATEEAEGQAK) are disordered. Residues 44-181 (LEPQIEDLIS…LREVERRLHS (138 aa)) adopt a coiled-coil conformation. The tract at residues 206-242 (VRSAPEVGAGEGEAGPELPRARDEEDPEPPVAAPDAL) is disordered.

Belongs to the SYCE family.

Functionally, may be involved in meiosis. In Homo sapiens (Human), this protein is Synaptonemal complex central element protein 1-like (SYCE1L).